The primary structure comprises 798 residues: Interphotoreceptor matrix proteoglycan 1 (798 aa).

The N-terminal stretch at 1 to 20 is a signal peptide; it reads MNLEIKHAILVLWIFLQVQG. Residue Asn142 is glycosylated (N-linked (GlcNAc...) asparagine). Positions 238–360 constitute an SEA 1 domain; the sequence is SEEKVEFSIS…PEAYLTAADL (123 aa). Thr442 and Thr445 each carry an O-linked (GalNAc...) threonine glycan. Residues 574–687 enclose the SEA 2 domain; that stretch reads HELVVFFSLR…YSLDIEPADQ (114 aa). N-linked (GlcNAc...) asparagine glycans are attached at residues Asn595 and Asn619. The Heparin- and hyaluronan-binding motif lies at 624-632; it reads KQLEILSFR. 2 N-linked (GlcNAc...) asparagine glycosylation sites follow: Asn633 and Asn651. The interval 741-798 is disordered; it reads ASQGQATPCRPPDHSTNQARQPSVKKLQRQQNKVVKKRNSELSATDFEELDDQDWEGN. Over residues 786-798 the composition is skewed to acidic residues; the sequence is DFEELDDQDWEGN.

Highly glycosylated (N- and O-linked carbohydrates and sialic acid).

The protein localises to the cell projection. It localises to the cilium. It is found in the photoreceptor outer segment. Its subcellular location is the secreted. The protein resides in the extracellular space. The protein localises to the extracellular matrix. It localises to the interphotoreceptor matrix. It is found in the photoreceptor inner segment. In terms of biological role, chondroitin sulfate-, heparin- and hyaluronan-binding protein. May serve to form a basic macromolecular scaffold comprising the insoluble interphotoreceptor matrix. This chain is Interphotoreceptor matrix proteoglycan 1, found in Rattus norvegicus (Rat).